We begin with the raw amino-acid sequence, 98 residues long: NADH-ubiquinone oxidoreductase chain 4L (98 aa).

A run of 3 helical transmembrane segments spans residues 1–21 (MSMV…GLLM), 29–49 (SLLC…MTIL), and 61–81 (IILL…LVMV).

Belongs to the complex I subunit 4L family. Core subunit of respiratory chain NADH dehydrogenase (Complex I) which is composed of 45 different subunits.

It localises to the mitochondrion inner membrane. The enzyme catalyses a ubiquinone + NADH + 5 H(+)(in) = a ubiquinol + NAD(+) + 4 H(+)(out). Core subunit of the mitochondrial membrane respiratory chain NADH dehydrogenase (Complex I) which catalyzes electron transfer from NADH through the respiratory chain, using ubiquinone as an electron acceptor. Part of the enzyme membrane arm which is embedded in the lipid bilayer and involved in proton translocation. The chain is NADH-ubiquinone oxidoreductase chain 4L (MT-ND4L) from Phocarctos hookeri (Hooker's sea lion).